An 81-amino-acid chain; its full sequence is Sec-independent protein translocase protein TatA (81 aa).

The helical transmembrane segment at 1–21 (MGGLQPWHWVIVIAVFVLLFG) threads the bilayer. A compositionally biased stretch (basic and acidic residues) spans 46–56 (MQAESKGDEPK). The disordered stretch occupies residues 46–81 (MQAESKGDEPKPATPIASERVDTTAPEQQSTDRHTA).

This sequence belongs to the TatA/E family. The Tat system comprises two distinct complexes: a TatABC complex, containing multiple copies of TatA, TatB and TatC subunits, and a separate TatA complex, containing only TatA subunits. Substrates initially bind to the TatABC complex, which probably triggers association of the separate TatA complex to form the active translocon.

It is found in the cell membrane. Its function is as follows. Part of the twin-arginine translocation (Tat) system that transports large folded proteins containing a characteristic twin-arginine motif in their signal peptide across membranes. TatA could form the protein-conducting channel of the Tat system. This chain is Sec-independent protein translocase protein TatA, found in Mycolicibacterium smegmatis (strain ATCC 700084 / mc(2)155) (Mycobacterium smegmatis).